The chain runs to 442 residues: Casein kinase 1-like protein 10 (442 aa).

In terms of domain architecture, Protein kinase spans 9 to 278; that stretch reads FKLGRKIGSG…LKRLFRDLFI (270 aa). ATP contacts are provided by residues 15 to 23 and lysine 38; that span reads IGSGSFGEL. Aspartate 128 serves as the catalytic Proton acceptor. Disordered regions lie at residues 299–323 and 381–421; these read GSIS…ERNE and AVMS…LSAR. Residues 305–317 are compositionally biased toward pro residues; it reads RPNPKPALDPPGP. The segment covering 384-394 has biased composition (low complexity); that stretch reads SSSQPGSSGEL. Residues 400–417 show a composition bias toward polar residues; the sequence is SKLFSSSAQKIQPVQETK.

The protein belongs to the protein kinase superfamily. CK1 Ser/Thr protein kinase family. Casein kinase I subfamily. In terms of assembly, monomer. Post-translationally, autophosphorylated.

It localises to the cytoplasm. The protein resides in the cell junction. Its subcellular location is the plasmodesma. The enzyme catalyses L-seryl-[protein] + ATP = O-phospho-L-seryl-[protein] + ADP + H(+). It catalyses the reaction L-threonyl-[protein] + ATP = O-phospho-L-threonyl-[protein] + ADP + H(+). Functionally, casein kinases are operationally defined by their preferential utilization of acidic proteins such as caseins as substrates. It can phosphorylate a large number of proteins. The chain is Casein kinase 1-like protein 10 from Arabidopsis thaliana (Mouse-ear cress).